Reading from the N-terminus, the 313-residue chain is Fe-S cluster assembly protein DRE2 (313 aa).

Positions 1 to 184 (MTLRILLLLH…KKLLDRSNEV (184 aa)) are N-terminal SAM-like domain. The span at 134–144 (NITSNSNNNDS) shows a compositional bias: low complexity. 3 disordered regions span residues 134-155 (NITS…NNTG), 187-254 (NLAS…QEDN), and 271-313 (NLII…RQSG). The interval 185–270 (KGNLASGTVK…NDLISELKSD (86 aa)) is linker. The segment covering 189 to 207 (ASGTVKSPSPGLTDTSAQN) has biased composition (polar residues). The span at 233–254 (SDSDNNEGRDLDDDDDDGQEDN) shows a compositional bias: acidic residues.

The protein belongs to the anamorsin family. In terms of assembly, monomer. Interacts with TAH18. Interacts with MIA40.

The protein localises to the cytoplasm. It localises to the mitochondrion intermembrane space. Its function is as follows. Component of the cytosolic iron-sulfur (Fe-S) protein assembly (CIA) machinery required for the maturation of extramitochondrial Fe-S proteins. Part of an electron transfer chain functioning in an early step of cytosolic Fe-S biogenesis, facilitating the de novo assembly of a [4Fe-4S] cluster on the scaffold complex CFD1-NBP35. Electrons are transferred to DRE2 from NADPH via the FAD- and FMN-containing protein TAH18. TAH18-DRE2 are also required for the assembly of the diferric tyrosyl radical cofactor of ribonucleotide reductase (RNR), probably by providing electrons for reduction during radical cofactor maturation in the catalytic small subunit RNR2. In Lodderomyces elongisporus (strain ATCC 11503 / CBS 2605 / JCM 1781 / NBRC 1676 / NRRL YB-4239) (Yeast), this protein is Fe-S cluster assembly protein DRE2 (DRE2).